The following is a 342-amino-acid chain: Holliday junction branch migration complex subunit RuvB (342 aa).

The segment at 1–182 (MRIEALNTAP…FGINSRLDYY (182 aa)) is large ATPase domain (RuvB-L). Residues isoleucine 21, arginine 22, glycine 63, lysine 66, threonine 67, threonine 68, 129 to 131 (EDY), arginine 172, tyrosine 182, and arginine 219 each bind ATP. Threonine 67 contacts Mg(2+). The interval 183–253 (SPELLQSIIV…VARRTLESLE (71 aa)) is small ATPAse domain (RuvB-S). The tract at residues 256 to 342 (EGGLDDMDKK…DHGPLFDHNS (87 aa)) is head domain (RuvB-H). Residues arginine 311 and arginine 316 each coordinate DNA.

This sequence belongs to the RuvB family. As to quaternary structure, homohexamer. Forms an RuvA(8)-RuvB(12)-Holliday junction (HJ) complex. HJ DNA is sandwiched between 2 RuvA tetramers; dsDNA enters through RuvA and exits via RuvB. An RuvB hexamer assembles on each DNA strand where it exits the tetramer. Each RuvB hexamer is contacted by two RuvA subunits (via domain III) on 2 adjacent RuvB subunits; this complex drives branch migration. In the full resolvosome a probable DNA-RuvA(4)-RuvB(12)-RuvC(2) complex forms which resolves the HJ.

It localises to the cytoplasm. The catalysed reaction is ATP + H2O = ADP + phosphate + H(+). The RuvA-RuvB-RuvC complex processes Holliday junction (HJ) DNA during genetic recombination and DNA repair, while the RuvA-RuvB complex plays an important role in the rescue of blocked DNA replication forks via replication fork reversal (RFR). RuvA specifically binds to HJ cruciform DNA, conferring on it an open structure. The RuvB hexamer acts as an ATP-dependent pump, pulling dsDNA into and through the RuvAB complex. RuvB forms 2 homohexamers on either side of HJ DNA bound by 1 or 2 RuvA tetramers; 4 subunits per hexamer contact DNA at a time. Coordinated motions by a converter formed by DNA-disengaged RuvB subunits stimulates ATP hydrolysis and nucleotide exchange. Immobilization of the converter enables RuvB to convert the ATP-contained energy into a lever motion, pulling 2 nucleotides of DNA out of the RuvA tetramer per ATP hydrolyzed, thus driving DNA branch migration. The RuvB motors rotate together with the DNA substrate, which together with the progressing nucleotide cycle form the mechanistic basis for DNA recombination by continuous HJ branch migration. Branch migration allows RuvC to scan DNA until it finds its consensus sequence, where it cleaves and resolves cruciform DNA. In Chlorobaculum parvum (strain DSM 263 / NCIMB 8327) (Chlorobium vibrioforme subsp. thiosulfatophilum), this protein is Holliday junction branch migration complex subunit RuvB.